The following is a 319-amino-acid chain: G-protein coupled receptor 171 (319 aa).

Residues 1-21 (MTNSSFFCPVYKDLEPFTYFF) lie on the Extracellular side of the membrane. N-linked (GlcNAc...) asparagine glycosylation occurs at Asn3. Residues 22–42 (YLVFLVGIIGSCFATWAFIQK) form a helical membrane-spanning segment. Topologically, residues 43–48 (NTNHRC) are cytoplasmic. Residues 49–69 (VSIYLINLLTADFLLTLALPV) form a helical membrane-spanning segment. The Extracellular segment spans residues 70–89 (KIVVDLGVAPWKLKIFHCQV). A helical transmembrane segment spans residues 90–110 (TACLIYINMYLSIIFLAFVSI). The Cytoplasmic segment spans residues 111-132 (DRCLQLTHSCKIYRIQEPGFAK). The helical transmembrane segment at 133-153 (MISTVVWLMVLLIMVPNMMIP) threads the bilayer. At 154 to 181 (IKDIKEKSNVGCMEFKKEFGRNWHLLTN) the chain is on the extracellular side. A helical transmembrane segment spans residues 182–202 (FICVAIFLNFSAIILISNCLV). Over 203–224 (IRQLYRNKDNENYPNVKKALIN) the chain is Cytoplasmic. A helical transmembrane segment spans residues 225–245 (ILLVTTGYIICFVPYHIVRIP). The Extracellular segment spans residues 246–268 (YTLSQTEVITDCSTRISLFKAKE). A helical membrane pass occupies residues 269–289 (ATLLLAVSNLCFDPILYYHLS). The Cytoplasmic portion of the chain corresponds to 290 to 319 (KAFRSKVTETFASPKETKAQKEKLRCENNA).

This sequence belongs to the G-protein coupled receptor 1 family. Expressed in both T-cell subsets and natural killer cells, while it is undetectable in B cells or CD14(+) monocytes. Expressed in peripheral blood mononuclear cells (PBMC) and Jurkat cells (at protein level).

Its subcellular location is the cell membrane. Its function is as follows. G-protein coupled receptor for Big LEN, a 16-amino acid neuropeptide produced from the precursor protein, proSAAS (encoded by PCSK1N). Acts through a G(i)-alpha-mediated pathway in response to Big LEN. Big LEN-GPR171 system plays an important role in regulating feeding and metabolism. Also plays a role in modulating fear and anxiety-like behaviors in the basolateral amygdala. Big LEN-GPR171 modulates the mu-type opioid receptor signaling and antinociception. Acts as a negative regulator T cell function. This chain is G-protein coupled receptor 171, found in Homo sapiens (Human).